The following is a 259-amino-acid chain: Dihydroorotate dehydrogenase B (NAD(+)), electron transfer subunit (259 aa).

Positions 2-102 (MQKQNMIVVN…LGPLGHGFPV (101 aa)) constitute an FAD-binding FR-type domain. FAD is bound by residues 53–56 (RPIS), 70–72 (LYR), and 77–78 (GT). [2Fe-2S] cluster is bound by residues Cys221, Cys226, Cys229, and Cys246.

The protein belongs to the PyrK family. Heterotetramer of 2 PyrK and 2 PyrD type B subunits. The cofactor is [2Fe-2S] cluster. FAD is required as a cofactor.

It functions in the pathway pyrimidine metabolism; UMP biosynthesis via de novo pathway; orotate from (S)-dihydroorotate (NAD(+) route): step 1/1. Functionally, responsible for channeling the electrons from the oxidation of dihydroorotate from the FMN redox center in the PyrD type B subunit to the ultimate electron acceptor NAD(+). This Bacillus cereus (strain Q1) protein is Dihydroorotate dehydrogenase B (NAD(+)), electron transfer subunit.